A 310-amino-acid chain; its full sequence is Zinc finger protein unc-98 (310 aa).

Residues 73–84 (GSSSAQTPTKSS) show a composition bias toward polar residues. A disordered region spans residues 73 to 102 (GSSSAQTPTKSSGGALDGSDQQEVRQDGTS). C2H2-type zinc fingers lie at residues 113 to 135 (YKCR…ERIH) and 141 to 163 (YVCG…AAQH). The C2H2-type 3; degenerate zinc-finger motif lies at 169-188 (YKCECGRTFFSYTEMLYHKH). An interaction with myo-3 region spans residues 198-310 (APETTTIKVS…RTSGYVTPRF (113 aa)). Residues 246-268 (YICEYCSKSYSDSRGLAYHMYSH) form a C2H2-type 4 zinc finger.

Interacts with hum-6, mep-1, myo-3, unc-96 and unc-97/PINCH. Expressed in embryos from 1.5- to 2-fold stage in myofibrils. In larvae and adults, it is expressed in body wall muscle, and in addition, anal depressor muscle and vulval muscles. More specifically it is found in the thick filaments of muscle fibers.

It localises to the nucleus. The protein resides in the cytoplasm. In terms of biological role, probable transcription factor required for muscle structure. Its dual subcellular localization suggests that it may function both as a muscle adhesion complex protein and as a transcription factor, or work together with transcription factors, to influence gene expression. Thought to act as a molecular bridge between unc-97 and myo-3 at the M-line of muscles, possibly in a signaling role. Plays a role in the formation of muscle connections, also called muscle arm extensions, between the body wall and the motor axons in the dorsal and ventral cord. In Caenorhabditis elegans, this protein is Zinc finger protein unc-98 (unc-98).